The primary structure comprises 245 residues: CTD nuclear envelope phosphatase 1B (245 aa).

A helical membrane pass occupies residues 7-29 (CLLGVRTFHGVTSRIWSFFLYIL). The 168-residue stretch at 58–225 (NNVKRKILVL…LNLLPMLDAL (168 aa)) folds into the FCP1 homology domain.

The protein belongs to the dullard family.

It is found in the endoplasmic reticulum membrane. The protein resides in the nucleus membrane. It carries out the reaction O-phospho-L-seryl-[protein] + H2O = L-seryl-[protein] + phosphate. The enzyme catalyses O-phospho-L-threonyl-[protein] + H2O = L-threonyl-[protein] + phosphate. Its function is as follows. Serine/threonine protein phosphatase that may dephosphorylate and activate lipins. Lipins are phosphatidate phosphatases that catalyze the conversion of phosphatidic acid to diacylglycerol and control the metabolism of fatty acids at different levels. May indirectly modulate the lipid composition of nuclear and/or endoplasmic reticulum membranes and be required for proper nuclear membrane morphology and/or dynamics. May also indirectly regulate the production of lipid droplets and triacylglycerol. May antagonize BMP signaling. The polypeptide is CTD nuclear envelope phosphatase 1B (ctdnep1b) (Danio rerio (Zebrafish)).